Here is a 298-residue protein sequence, read N- to C-terminus: tRNA U34 carboxymethyltransferase (298 aa).

Carboxy-S-adenosyl-L-methionine contacts are provided by residues Lys-69, Trp-83, Lys-88, Gly-107, 129 to 131 (DPS), 156 to 157 (VE), Tyr-176, and Arg-291.

It belongs to the class I-like SAM-binding methyltransferase superfamily. CmoB family. Homotetramer.

It carries out the reaction carboxy-S-adenosyl-L-methionine + 5-hydroxyuridine(34) in tRNA = 5-carboxymethoxyuridine(34) in tRNA + S-adenosyl-L-homocysteine + H(+). Catalyzes carboxymethyl transfer from carboxy-S-adenosyl-L-methionine (Cx-SAM) to 5-hydroxyuridine (ho5U) to form 5-carboxymethoxyuridine (cmo5U) at position 34 in tRNAs. This is tRNA U34 carboxymethyltransferase from Campylobacter curvus (strain 525.92).